The chain runs to 105 residues: Host transcription reprogramming factor 7 (105 aa).

Residues 1 to 19 (MKTKTIFQLVALFAIGATA) form the signal peptide. Residues 69–95 (YWCRIGNCNAAFKSLAARCRHEKTAVH) form a C2H2-type zinc finger.

The protein localises to the secreted. It localises to the host nucleus. In terms of biological role, probable secreted effector that translocates into the nuclei of host cells to reprogram the expression of targeted genes by binding on effector binding elements in rice. This Pyricularia oryzae (strain 70-15 / ATCC MYA-4617 / FGSC 8958) (Rice blast fungus) protein is Host transcription reprogramming factor 7.